The following is a 138-amino-acid chain: Large ribosomal subunit protein bL17 (138 aa).

It belongs to the bacterial ribosomal protein bL17 family. Part of the 50S ribosomal subunit. Contacts protein L32.

The polypeptide is Large ribosomal subunit protein bL17 (Nitrobacter winogradskyi (strain ATCC 25391 / DSM 10237 / CIP 104748 / NCIMB 11846 / Nb-255)).